A 105-amino-acid polypeptide reads, in one-letter code: Mini zinc finger protein 2 (105 aa).

Positions 1–29 (MGPQQDRSAAKPYANGSTAAAAAAGRKEN) are disordered. Residues 35 to 84 (YRECQRNHAASIGGHAVDGCREFMASGADGTAAALLCAACGCHQSFHRRE) form a ZF-HD dimerization-type; degenerate zinc finger.

Homo- and heterodimers.

It is found in the cytoplasm. Its function is as follows. Inhibits zinc finger homeodomain (ZHD) transcription factors, by interacting with them to prevent both their nuclear localization and their DNA-binding properties. The polypeptide is Mini zinc finger protein 2 (MIF2) (Oryza sativa subsp. indica (Rice)).